The sequence spans 1881 residues: MPYSVGFREADAATSFLRAARSGNLDKALDHLRNGVDINTCNQNGLNGLHLASKEGHVKMVVELLHKEIILETTTKKGNTALHIAALAGQDEVVRELVNYGANVNAQSQKGFTPLYMAAQENHLEVVKFLLENGANQNVATEDGFTPLAVALQQGHENVVAHLINYGTKGKVRLPALHIAARNDDTRTAAVLLQNDPNPDVLSKTGFTPLHIAAHYENLNVAQLLLNRGASVNFTPQNGITPLHIASRRGNVIMVRLLLDRGAQIETKTKDELTPLHCAARNGHVRISEILLDHGAPIQAKTKNGLSPIHMAAQGDHLDCVRLLLQYDAEIDDITLDHLTPLHVAAHCGHHRVAKVLLDKGAKPNSRALNGFTPLHIACKKNHVRVMELLLKTGASIDAVTESGLTPLHVASFMGHLPIVKNLLQRGASPNVSNVKVETPLHMAARAGHTEVAKYLLQNKAKVNAKAKDDQTPLHCAARIGHTNMVKLLLENNANPNLATTAGHTPLHIAAREGHVETVLALLEKEASQACMTKKGFTPLHVAAKYGKVRVAELLLERDAHPNAAGKNGLTPLHVAVHHNNLDIVKLLLPRGGSPHSPAWNGYTPLHIAAKQNQVEVARSLLQYGGSANAESVQGVTPLHLAAQEGHAEMVALLLSKQANGNLGNKSGLTPLHLVAQEGHVPVADVLIKHGVMVDATTRMGYTPLHVASHYGNIKLVKFLLQHQADVNAKTKLGYSPLHQAAQQGHTDIVTLLLKNGASPNEVSSDGTTPLAIAKRLGYISVTDVLKVVTDETSFVLVSDKHRMSFPETVDEILDVSEDEGEELISFKAERRDSRDVDEEKELLDFVPKLDQVVESPAIPRIPCAMPETVVIRSEEQEQASKEYDEDSLIPSSPATETSDNISPVASPVHTGFLVSFMVDARGGSMRGSRHNGLRVVIPPRTCAAPTRITCRLVKPQKLSTPPPLAEEEGLASRIIALGPTGAQFLSPVIVEIPHFASHGRGDRELVVLRSENGSVWKEHRSRYGESYLDQILNGMDEELGSLEELEKKRVCRIITTDFPLYFVIMSRLCQDYDTIGPEGGSLKSKLVPLVQATFPENAVTKRVKLALQAQPVPDELVTKLLGNQATFSPIVTVEPRRRKFHRPIGLRIPLPPSWTDNPRDSGEGDTTSLRLLCSVIGGTDQAQWEDITGTTKLVYANECANFTTNVSARFWLSDCPRTAEAVNFATLLYKELTAVPYMAKFVIFAKMNDPREGRLRCYCMTDDKVDKTLEQHENFVEVARSRDIEVLEGMSLFAELSGNLVPVKKAAQQRSFHFQSFRENRLAMPVKVRDSSREPGGSLSFLRKAMKYEDTQHILCHLNITMPPCAKGSGAEDRRRTPTPLALRYSILSESTPGSLSGTEQAEMKMAVISEHLGLSWAELARELQFSVEDINRIRVENPNSLLEQSVALLNLWVIREGQNANMENLYTALQSIDRGEIVNMLEGSGRQSRNLKPDRRHTDRDYSLSPSQMNGYSSLQDELLSPASLGCALSSPLRADQYWNEVAVLDAIPLAATEHDTMLEMSDMQVWSAGLTPSLVTAEDSSLECSKAEDSDATGHEWKLEGALSEEPRGPELGSLELVEDDTVDSDATNGLIDLLEQEEGQRSEEKLPGSKRQDDATGAGQDSENEVSLVSGHQRGQARITHSPTVSQVTERSQDRLQDWDADGSIVSYLQDAAQGSWQEEVTQGPHSFQGTSTMTEGLEPGGSQEYEKVLVSVSEHTWTEQPEAESSQADRDRRQQGQEEQVQEAKNTFTQVVQGNEFQNIPGEQVTEEQFTDEQGNIVTKKIIRKVVRQIDLSSADAAQEHEEVTVEGPLEDPSELEVDIDYFMKHSKDHTSTPNP.

The tract at residues M1 to F827 is 89 kDa domain. 23 ANK repeats span residues N44–T73, K77–A106, K110–V139, D143–V172, L174–V201, T205–F234, N238–T267, D271–A300, N304–D333, D337–S366, N370–A399, S403–V432, K436–A465, D469–L498, A502–C531, K535–A564, N568–S597, N601–A630, Q634–L663, S667–A696, M700–A729, L733–E762, and D766–F795. A (3S)-3-hydroxyasparagine; by HIF1AN; partial modification is found at N105. At N233 the chain carries (3S)-3-hydroxyasparagine; by HIF1AN; partial. S429 is modified (phosphoserine). Residues N431 and N464 each carry the (3S)-3-hydroxyasparagine; by HIF1AN; partial modification. (3S)-3-hydroxyasparagine; by HIF1AN; partial occurs at positions 629 and 662. Position 695 is a (3S)-3-hydroxyaspartate; by HIF1AN; partial (D695). The residue at position 728 (N728) is a (3S)-3-hydroxyasparagine; by HIF1AN; partial. A Phosphoserine modification is found at S759. N761 carries the post-translational modification (3S)-3-hydroxyasparagine; by HIF1AN; partial. 4 positions are modified to phosphoserine: S781, S817, S834, and S856. The segment at E875–P904 is disordered. Residues I890–P904 are compositionally biased toward polar residues. 2 consecutive ZU5 domains span residues F913–R1068 and C1070–C1216. T961 carries the post-translational modification Phosphothreonine. A Phosphotyrosine modification is found at Y1073. Position 1082 is a phosphoserine (S1082). The UPA domain stretch occupies residues T1234 to T1362. A phosphothreonine mark is found at T1378 and T1380. Residues A1383–P1881 are 55 kDa regulatory domain. Phosphoserine is present on residues S1390, S1392, and S1396. T1400 is subject to Phosphothreonine. The region spanning A1403–G1487 is the Death domain. 2 positions are modified to phosphoserine: S1428 and S1486. The segment at S1486 to Q1510 is disordered. Residues L1493 to Y1504 are compositionally biased toward basic and acidic residues. A phosphoserine mark is found at S1523 and S1533. The interval S1583 to P1613 is disordered. Basic and acidic residues predominate over residues S1588–G1612. Position 1617 is a phosphoserine (S1617). Disordered regions lie at residues L1637–W1703, Q1718–N1791, and A1840–S1859. Basic and acidic residues predominate over residues E1642–D1658. A phosphoserine mark is found at S1666, S1671, S1686, S1690, and S1696. The segment covering I1683 to E1694 has biased composition (polar residues). Composition is skewed to polar residues over residues Q1718–T1739 and S1758–S1771. The span at Q1772 to G1781 shows a compositional bias: basic and acidic residues.

In terms of assembly, component of the ankyrin-1 complex in the erythrocyte, composed of ANK1, RHCE, RHAG, SLC4A1, EPB42, GYPA, GYPB and AQP1. Interacts with a number of integral membrane proteins and cytoskeletal proteins. Interacts (via N-terminus) with SPTB/spectrin (beta chain). Also interacts with TTN/titin. Isoform Mu17 interacts with OBSCN isoform 3/obscurin. Interacts with HIF1AN. Interacts (via ANK 1-5 repeats) with RHCE; this interaction mediates the primary membrane attachment site for ANK1. Interacts (via ANK 1-2 repeats) with AQP1 (via the N-terminal). Interacts (via ANK 1-13 repeats) with EPB42. Interacts directly with SLC4A1 (via the cytoplasmic domain); this interaction is mediated by the SLC4A1 Band 3-II and Band 3-III dimers. Regulated by phosphorylation. In terms of processing, palmitoylated. Post-translationally, hydroxylated by HIF1AN at several asparagine and 1 aspartate residue within ANK repeat region. Hydroxylation seems to increase the conformational stability of this region and may also modulate protein-protein interactions mediated by the ANK repeat region. (Microbial infection) Probably cleaved by P.falciparum SERA6; the cleavage probably causes the disruption of the actin cytoskeleton and the rupture of the erythrocyte cell membrane releasing the merozoites. Isoform Mu17, isoform Mu18, isoform Mu19 and isoform Mu20 are expressed in skeletal muscle. Isoform Br21 is expressed in brain.

It is found in the cytoplasm. Its subcellular location is the cytoskeleton. The protein localises to the membrane. The protein resides in the myofibril. It localises to the sarcomere. It is found in the m line. Its subcellular location is the sarcoplasmic reticulum. Component of the ankyrin-1 complex, a multiprotein complex involved in the stability and shape of the erythrocyte membrane. Attaches integral membrane proteins to cytoskeletal elements; binds to the erythrocyte membrane protein band 4.2, to Na-K ATPase, to the lymphocyte membrane protein GP85, and to the cytoskeletal proteins fodrin, tubulin, vimentin and desmin. Erythrocyte ankyrins also link spectrin (beta chain) to the cytoplasmic domain of the erythrocytes anion exchange protein; they retain most or all of these binding functions. In terms of biological role, together with obscurin in skeletal muscle may provide a molecular link between the sarcoplasmic reticulum and myofibrils. This chain is Ankyrin-1, found in Homo sapiens (Human).